A 248-amino-acid chain; its full sequence is Triosephosphate isomerase A (248 aa).

Substrate contacts are provided by N11 and K13. Residue H95 is the Electrophile of the active site. The active-site Proton acceptor is E165.

Belongs to the triosephosphate isomerase family. As to quaternary structure, homodimer.

It localises to the cytoplasm. It catalyses the reaction dihydroxyacetone phosphate = methylglyoxal + phosphate. It carries out the reaction D-glyceraldehyde 3-phosphate = dihydroxyacetone phosphate. The protein operates within carbohydrate degradation; glycolysis; D-glyceraldehyde 3-phosphate from glycerone phosphate: step 1/1. Its pathway is carbohydrate biosynthesis; gluconeogenesis. Its function is as follows. Triosephosphate isomerase is an extremely efficient metabolic enzyme that catalyzes the interconversion between dihydroxyacetone phosphate (DHAP) and D-glyceraldehyde-3-phosphate (G3P) in glycolysis and gluconeogenesis. It is also responsible for the non-negligible production of methylglyoxal a reactive cytotoxic side-product that modifies and can alter proteins, DNA and lipids. This chain is Triosephosphate isomerase A (tpi1a), found in Danio rerio (Zebrafish).